The following is a 564-amino-acid chain: Phenylalanine--tRNA ligase beta subunit (564 aa).

Residues 286 to 362 enclose the B5 domain; that stretch reads YFQNMLEVNV…IGMGLDSFKP (77 aa). Aspartate 340, aspartate 346, glutamate 349, and glutamate 350 together coordinate Mg(2+).

Belongs to the phenylalanyl-tRNA synthetase beta subunit family. Type 2 subfamily. In terms of assembly, tetramer of two alpha and two beta subunits. It depends on Mg(2+) as a cofactor.

Its subcellular location is the cytoplasm. It catalyses the reaction tRNA(Phe) + L-phenylalanine + ATP = L-phenylalanyl-tRNA(Phe) + AMP + diphosphate + H(+). The protein is Phenylalanine--tRNA ligase beta subunit of Borrelia turicatae (strain 91E135).